The following is a 120-amino-acid chain: NAD(P)H-quinone oxidoreductase subunit 3, chloroplastic (120 aa).

The next 3 membrane-spanning stretches (helical) occupy residues 9–29 (IFWTFLIIASLIPILAFWISG), 64–84 (MFALVFVVFDVETVFLYPWAM), and 88–108 (VLGVSVFIEAFIFVLILVVGL).

The protein belongs to the complex I subunit 3 family. NDH is composed of at least 16 different subunits, 5 of which are encoded in the nucleus.

It is found in the plastid. It localises to the chloroplast thylakoid membrane. The enzyme catalyses a plastoquinone + NADH + (n+1) H(+)(in) = a plastoquinol + NAD(+) + n H(+)(out). The catalysed reaction is a plastoquinone + NADPH + (n+1) H(+)(in) = a plastoquinol + NADP(+) + n H(+)(out). Functionally, NDH shuttles electrons from NAD(P)H:plastoquinone, via FMN and iron-sulfur (Fe-S) centers, to quinones in the photosynthetic chain and possibly in a chloroplast respiratory chain. The immediate electron acceptor for the enzyme in this species is believed to be plastoquinone. Couples the redox reaction to proton translocation, and thus conserves the redox energy in a proton gradient. In Brachypodium distachyon (Purple false brome), this protein is NAD(P)H-quinone oxidoreductase subunit 3, chloroplastic.